Reading from the N-terminus, the 358-residue chain is L-Ala-D/L-Glu epimerase (358 aa).

Substrate-binding residues include Arg-24, Thr-135, and Lys-160. Lys-162 (proton acceptor; specific for (R)-substrate epimerization) is an active-site residue. Mg(2+)-binding residues include Asp-190, Glu-218, and Asp-243. The active-site Proton acceptor; specific for (S)-substrate epimerization is the Lys-267. Substrate contacts are provided by Cys-295, Asp-320, and Asp-322.

This sequence belongs to the mandelate racemase/muconate lactonizing enzyme family. Requires Mg(2+) as cofactor.

It catalyses the reaction L-alanyl-L-glutamate = L-alanyl-D-glutamate. The protein operates within cell wall degradation; peptidoglycan degradation. Its function is as follows. Catalyzes the epimerization of L-Ala-D-Glu to L-Ala-L-Glu and has probably a role in the metabolism of the murein peptide, of which L-Ala-D-Glu is a component. Is also able to catalyze the epimerization of L-Ala-D-Asp. This Clostridium acetobutylicum (strain ATCC 824 / DSM 792 / JCM 1419 / IAM 19013 / LMG 5710 / NBRC 13948 / NRRL B-527 / VKM B-1787 / 2291 / W) protein is L-Ala-D/L-Glu epimerase.